A 221-amino-acid chain; its full sequence is Small ribosomal subunit protein uS5 (221 aa).

Positions 46–109 (LKDEVINIER…DNAKLNIIEI (64 aa)) constitute an S5 DRBM domain.

The protein belongs to the universal ribosomal protein uS5 family. As to quaternary structure, part of the 30S ribosomal subunit. Contacts protein S4.

In terms of biological role, with S4 and S12 plays an important role in translational accuracy. This chain is Small ribosomal subunit protein uS5, found in Picrophilus torridus (strain ATCC 700027 / DSM 9790 / JCM 10055 / NBRC 100828 / KAW 2/3).